Here is a 285-residue protein sequence, read N- to C-terminus: Probable endonuclease 4 (285 aa).

Residues His-69, His-109, Glu-145, Asp-179, His-182, His-216, Asp-229, His-231, and Glu-261 each coordinate Zn(2+).

Belongs to the AP endonuclease 2 family. The cofactor is Zn(2+).

It carries out the reaction Endonucleolytic cleavage to 5'-phosphooligonucleotide end-products.. Endonuclease IV plays a role in DNA repair. It cleaves phosphodiester bonds at apurinic or apyrimidinic (AP) sites, generating a 3'-hydroxyl group and a 5'-terminal sugar phosphate. The chain is Probable endonuclease 4 from Shigella boydii serotype 4 (strain Sb227).